We begin with the raw amino-acid sequence, 236 residues long: 2-C-methyl-D-erythritol 4-phosphate cytidylyltransferase (236 aa).

It belongs to the IspD/TarI cytidylyltransferase family. IspD subfamily.

The enzyme catalyses 2-C-methyl-D-erythritol 4-phosphate + CTP + H(+) = 4-CDP-2-C-methyl-D-erythritol + diphosphate. The protein operates within isoprenoid biosynthesis; isopentenyl diphosphate biosynthesis via DXP pathway; isopentenyl diphosphate from 1-deoxy-D-xylulose 5-phosphate: step 2/6. In terms of biological role, catalyzes the formation of 4-diphosphocytidyl-2-C-methyl-D-erythritol from CTP and 2-C-methyl-D-erythritol 4-phosphate (MEP). The chain is 2-C-methyl-D-erythritol 4-phosphate cytidylyltransferase from Burkholderia pseudomallei (strain 1106a).